A 72-amino-acid polypeptide reads, in one-letter code: Protein SlyX (72 aa).

The protein belongs to the SlyX family.

The sequence is that of Protein SlyX from Cronobacter sakazakii (strain ATCC BAA-894) (Enterobacter sakazakii).